Consider the following 79-residue polypeptide: U-actitoxin-Avd8b (79 aa).

The first 19 residues, 1-19, serve as a signal peptide directing secretion; that stretch reads MKSLVIVFVVLLGVAMISA. Residues 20–36 constitute a propeptide that is removed on maturation; it reads NEEELLAILQDQRNDAR.

It belongs to the sea anemone 8 toxin family.

It localises to the secreted. The protein resides in the nematocyst. In Anemonia viridis (Snakelocks anemone), this protein is U-actitoxin-Avd8b.